The primary structure comprises 60 residues: Large ribosomal subunit protein bL32 (60 aa).

A disordered region spans residues 1–60; sequence MAVQQNKKSRSARDMRRSHDALEPNALSVEKSTGEVHLRHHVSPDGFYRGRKVIDKGADE. Positions 11–22 are enriched in basic and acidic residues; the sequence is SARDMRRSHDAL.

It belongs to the bacterial ribosomal protein bL32 family.

This is Large ribosomal subunit protein bL32 from Stutzerimonas stutzeri (strain A1501) (Pseudomonas stutzeri).